Here is a 187-residue protein sequence, read N- to C-terminus: Protein SCM4 (187 aa).

The next 3 membrane-spanning stretches (helical) occupy residues Ile-11 to Ile-31, Val-45 to Gly-65, and Leu-80 to Phe-100. Over residues Asp-114 to Glu-134 the composition is skewed to basic and acidic residues. Residues Asp-114–Ala-135 are disordered. A helical membrane pass occupies residues Met-162–Leu-182.

Belongs to the ATG33 family.

It localises to the membrane. This is Protein SCM4 (SCM4) from Saccharomyces cerevisiae (strain ATCC 204508 / S288c) (Baker's yeast).